A 320-amino-acid chain; its full sequence is Mechanosensory protein 3 (320 aa).

2 LIM zinc-binding domains span residues 29–79 and 89–145; these read CNCC…CSQH and CAGC…CMTH. The segment at residues 216–275 is a DNA-binding region (homeobox); it reads RRGPRTTIKQNQLDVLNEMFSNTPKPSKHARAKKALETGLSMRVIQVWFQNRRSKERRLK.

Its subcellular location is the nucleus. Functionally, specifies differentiation of the set of six touch receptor neurons. Binds cooperatively as a heterodimer with unc-86 to sites in the mec-3 gene promoter. The sequence is that of Mechanosensory protein 3 (mec-3) from Caenorhabditis remanei (Caenorhabditis vulgaris).